Here is a 234-residue protein sequence, read N- to C-terminus: tRNA (guanine-N(1)-)-methyltransferase (234 aa).

Residues G112 and I132–L137 contribute to the S-adenosyl-L-methionine site.

The protein belongs to the RNA methyltransferase TrmD family. In terms of assembly, homodimer.

It localises to the cytoplasm. The enzyme catalyses guanosine(37) in tRNA + S-adenosyl-L-methionine = N(1)-methylguanosine(37) in tRNA + S-adenosyl-L-homocysteine + H(+). Functionally, specifically methylates guanosine-37 in various tRNAs. The sequence is that of tRNA (guanine-N(1)-)-methyltransferase from Campylobacter jejuni (strain RM1221).